The following is a 151-amino-acid chain: D-aminoacyl-tRNA deacylase (151 aa).

Positions 136–137 match the Gly-cisPro motif, important for rejection of L-amino acids motif; that stretch reads GP.

This sequence belongs to the DTD family. In terms of assembly, homodimer.

It localises to the cytoplasm. It catalyses the reaction glycyl-tRNA(Ala) + H2O = tRNA(Ala) + glycine + H(+). The catalysed reaction is a D-aminoacyl-tRNA + H2O = a tRNA + a D-alpha-amino acid + H(+). Functionally, an aminoacyl-tRNA editing enzyme that deacylates mischarged D-aminoacyl-tRNAs. Also deacylates mischarged glycyl-tRNA(Ala), protecting cells against glycine mischarging by AlaRS. Acts via tRNA-based rather than protein-based catalysis; rejects L-amino acids rather than detecting D-amino acids in the active site. By recycling D-aminoacyl-tRNA to D-amino acids and free tRNA molecules, this enzyme counteracts the toxicity associated with the formation of D-aminoacyl-tRNA entities in vivo and helps enforce protein L-homochirality. The protein is D-aminoacyl-tRNA deacylase of Lactococcus lactis subsp. lactis (strain IL1403) (Streptococcus lactis).